We begin with the raw amino-acid sequence, 322 residues long: Serine protease 38 (322 aa).

A signal peptide spans 1 to 28; sequence MAALTSGLGVLGYLLFPLLLASPTWVTS. The propeptide at 29-55 is activation peptide; that stretch reads VSRRHPKSQANSLSGDVACGQPVLQGK. Residues 56 to 289 form the Peptidase S1 domain; the sequence is LLGGEFARDR…FLSWIRYHLQ (234 aa). An intrachain disulfide couples cysteine 81 to cysteine 97. Active-site charge relay system residues include histidine 96 and aspartate 146. An N-linked (GlcNAc...) asparagine glycan is attached at asparagine 176. 3 disulfide bridges follow: cysteine 179/cysteine 247, cysteine 210/cysteine 226, and cysteine 237/cysteine 265. The active-site Charge relay system is the serine 241. 2 N-linked (GlcNAc...) asparagine glycosylation sites follow: asparagine 250 and asparagine 276.

This sequence belongs to the peptidase S1 family.

It is found in the secreted. The protein is Serine protease 38 (Prss38) of Mus musculus (Mouse).